The following is a 576-amino-acid chain: MELENIVANTVLLKAREGGGGNRKGKSKKWRQMLQFPHISQCEELRLSLERDYHSLCERQPIGRLLFREFCATRPELTRCTAFLDGVAEYEVTPDEKRKACGCRLMQNFLSHTGPDLIPEVPRQLVSNCAQRLEQGPCKDLFQELTRLTHEYLSMAPFADYLDSIYFNRFLQWKWLERQPVTKNTFRQYRVLGKGGFGEVCACQVRATGKMYACKKLEKKRIKKRKGEAMALNEKQILEKVNSRFVVSLAYAYETKDALCLVLTLMNGGDLKFHIYHMGQAGFPEARAVFYAAEICCGLEDLHRERIVYRDLKPENILLDDHGHIRISDLGLTVHVPEGQTIKGRVGTVGYMAPEVVKNERYTFSPDWWALGCLLYEMIAGQSPFQQRKKKIKREEVERLVKEVAEEYTDRFSPQARSLCSQLPNKDPAERLGCRGGGAREVKEHPLFKKLNFKRLGAGMLEPPFKPDPQAIYCKDVLDIEQFSTVKGVDLEPTDQDFYQKFATGSVSIPWQNEMVETECFQELNVFGLDGSVPPDLDWKGQPTAPPKKGLLQRLFSRQDCCGNCSDSEEELPTRL.

Residues methionine 1–threonine 185 are N-terminal. In terms of domain architecture, RGS spans tyrosine 53–leucine 171. The 263-residue stretch at phenylalanine 186–phenylalanine 448 folds into the Protein kinase domain. Residues leucine 192–valine 200, lysine 215, and threonine 264–aspartate 270 contribute to the ATP site. Aspartate 311 functions as the Proton acceptor in the catalytic mechanism. Position 315–318 (glutamate 315–leucine 318) interacts with ATP. Residues lysine 449–glutamate 514 form the AGC-kinase C-terminal domain. Serine 484 bears the Phosphoserine; by autocatalysis mark. The residue at position 485 (threonine 485) is a Phosphothreonine; by autocatalysis. Residues cysteine 561, cysteine 562, and cysteine 565 are each lipidated (S-palmitoyl cysteine). A phosphoserine mark is found at serine 566 and serine 568.

This sequence belongs to the protein kinase superfamily. AGC Ser/Thr protein kinase family. GPRK subfamily. As to quaternary structure, interacts with GIT1. As to expression, widely expressed. Detectable in all brain areas examined.

Its subcellular location is the membrane. The enzyme catalyses [G-protein-coupled receptor] + ATP = [G-protein-coupled receptor]-phosphate + ADP + H(+). Functionally, specifically phosphorylates the activated forms of G protein-coupled receptors. Such receptor phosphorylation initiates beta-arrestin-mediated receptor desensitization, internalization, and signaling events leading to their desensitization. Seems to be involved in the desensitization of D2-like dopamine receptors in striatum and chemokine receptor CXCR4 which is critical for CXCL12-induced cell chemotaxis. Phosphorylates rhodopsin (RHO) (in vitro) and a non G-protein-coupled receptor: LRP6 during Wnt signaling (in vitro). This chain is G protein-coupled receptor kinase 6 (Grk6), found in Rattus norvegicus (Rat).